Here is a 213-residue protein sequence, read N- to C-terminus: Validoxylamine A 7'-phosphate phosphatase (213 aa).

Residue D8 is the Nucleophile of the active site. A divalent metal cation contacts are provided by D8 and D10. Residues 8–10 (DLD), 107–108 (TS), and K140 contribute to the substrate site. The Proton donor role is filled by D10. D165 provides a ligand contact to a divalent metal cation.

The protein belongs to the HAD-like hydrolase superfamily. CbbY/CbbZ/Gph/YieH family. Mg(2+) is required as a cofactor. The cofactor is Mn(2+). Requires Co(2+) as cofactor.

It carries out the reaction validoxylamine A 7'-phosphate + H2O = validoxylamine A + phosphate. Its function is as follows. Involved in the biosynthesis of the antifungal agent validamycin A. Catalyzes the dephosphorylation of validoxylamine A 7'-phosphate to yield validoxylamine A. VldH is also able to convert trehalose 6-phosphate to trehalose. The protein is Validoxylamine A 7'-phosphate phosphatase of Streptomyces hygroscopicus subsp. limoneus.